The following is a 108-amino-acid chain: Insertion element IS6110 uncharacterized 12.0 kDa protein (108 aa).

This sequence belongs to the transposase 8 family.

The protein is Insertion element IS6110 uncharacterized 12.0 kDa protein of Mycobacterium bovis (strain ATCC BAA-935 / AF2122/97).